Consider the following 322-residue polypeptide: uncharacterized protein (322 aa).

The next 4 helical transmembrane spans lie at 24–44, 68–88, 100–120, and 125–145; these read LLHL…IQIT, LFFE…LIFI, IVTS…TPTF, and VQLI…MPSL.

The protein resides in the cell membrane. This is an uncharacterized protein from Bacillus subtilis (strain 168).